Here is a 409-residue protein sequence, read N- to C-terminus: Nucleoprotein (409 aa).

Disordered stretches follow at residues 1–32, 44–63, 120–145, and 164–193; these read MASG…SSGN, LNSP…ENLK, GADT…LRFS, and RSGR…SGAE. A compositionally biased stretch (low complexity) spans 15–31; sequence PVIKLGGPKPPKVGSSG. Positions 29–160 are RNA-binding; that stretch reads SSGNASWFQA…GNFRWDFIPI (132 aa). Residues 31-156 form the CoV N NTD domain; sequence GNASWFQALK…GGPDGNFRWD (126 aa). The segment covering 164 to 179 has biased composition (low complexity); the sequence is RSGRSTAASSAASSRA. Basic and acidic residues predominate over residues 180 to 192; sequence PSRDGSRGRRSGA. S190 bears the Phosphoserine; by host mark. Residues 215 to 331 enclose the CoV N CTD domain; the sequence is TKAKADEMAH…QCVDGVGTRP (117 aa). Residues 226-333 form a dimerization region; that stretch reads RYCKRTIPPG…VDGVGTRPKD (108 aa). Residues C320 and C323 are joined by a disulfide bond. Residues 327–409 form a disordered region; sequence VGTRPKDDEP…GESALGENEL (83 aa). Residues 341-355 show a composition bias toward polar residues; that stretch reads RPNSRPATRTSSPAP. The span at 368–384 shows a compositional bias: basic and acidic residues; it reads KQDDEVDKALTSDEERN. T378 carries the post-translational modification Phosphothreonine; by host. The residue at position 379 (S379) is a Phosphoserine; by host.

It belongs to the gammacoronavirus nucleocapsid protein family. As to quaternary structure, homooligomer. Both monomeric and oligomeric forms interact with RNA. Interacts with protein M. Interacts with NSP3; this interaction serves to tether the genome to the newly translated replicase-transcriptase complex at a very early stage of infection. Post-translationally, ADP-ribosylated. The ADP-ribosylation is retained in the virion during infection. In terms of processing, phosphorylated on serine and threonine residues.

It is found in the virion. The protein localises to the host endoplasmic reticulum-Golgi intermediate compartment. The protein resides in the host Golgi apparatus. Its function is as follows. Packages the positive strand viral genome RNA into a helical ribonucleocapsid (RNP) and plays a fundamental role during virion assembly through its interactions with the viral genome and membrane protein M. Plays an important role in enhancing the efficiency of subgenomic viral RNA transcription as well as viral replication. The sequence is that of Nucleoprotein from Avian infectious bronchitis virus (strain D1466) (IBV).